The chain runs to 182 residues: Ribosome maturation factor RimM (182 aa).

A PRC barrel domain is found at 102–182 (EEGDYYWKDL…TIEVDWDPGF (81 aa)).

The protein belongs to the RimM family. In terms of assembly, binds ribosomal protein uS19.

It is found in the cytoplasm. In terms of biological role, an accessory protein needed during the final step in the assembly of 30S ribosomal subunit, possibly for assembly of the head region. Essential for efficient processing of 16S rRNA. May be needed both before and after RbfA during the maturation of 16S rRNA. It has affinity for free ribosomal 30S subunits but not for 70S ribosomes. This is Ribosome maturation factor RimM from Salmonella gallinarum (strain 287/91 / NCTC 13346).